The primary structure comprises 151 residues: Mini-ribonuclease 3 (151 aa).

Asp-28 is a catalytic residue.

It belongs to the MrnC RNase family. Homodimer. The cofactor is Mg(2+).

Its subcellular location is the cytoplasm. Its function is as follows. Involved in correct processing of both the 5' and 3' ends of 23S rRNA precursor. Processes 30S rRNA precursor transcript even in absence of ribonuclease 3 (Rnc); Rnc processes 30S rRNA into smaller rRNA precursors. The chain is Mini-ribonuclease 3 from Clostridium tetani (strain Massachusetts / E88).